We begin with the raw amino-acid sequence, 145 residues long: Fluoride-specific ion channel FluC 2 (145 aa).

Transmembrane regions (helical) follow at residues 16 to 36 (MLLV…LSAA), 42 to 62 (VISV…GWLL), 80 to 100 (LFAG…AVDT), and 113 to 133 (ILYA…GIAL). Residues glycine 88 and threonine 91 each contribute to the Na(+) site.

It belongs to the fluoride channel Fluc/FEX (TC 1.A.43) family.

It is found in the cell membrane. The catalysed reaction is fluoride(in) = fluoride(out). With respect to regulation, na(+) is not transported, but it plays an essential structural role and its presence is essential for fluoride channel function. Functionally, fluoride-specific ion channel. Important for reducing fluoride concentration in the cell, thus reducing its toxicity. The polypeptide is Fluoride-specific ion channel FluC 2 (Leifsonia xyli subsp. xyli (strain CTCB07)).